We begin with the raw amino-acid sequence, 152 residues long: uncharacterized protein (152 aa).

At 1–5 (MWFPQ) the chain is on the cytoplasmic side. Residues 6–26 (IIAGMAAGGAASAMTPGKVLF) form a helical membrane-spanning segment. At 27 to 38 (TNALGLGCSRSR) the chain is on the extracellular side. A helical membrane pass occupies residues 39–59 (GLFLEMFGTAVLCFTVLMTAV). Topologically, residues 60–65 (EKRETN) are cytoplasmic. The chain crosses the membrane as a helical span at residues 66–86 (FMAALPIGISLFMAHMALTGY). The Extracellular segment spans residues 87–110 (TGTGVNPARSLGAAVAARYFPHYH). Positions 92 to 94 (NPA) match the NPA motif. Residues 111–131 (WIYWISPLLGAFLAWSVWQLL) form a helical membrane-spanning segment. Over 132-152 (QILDYTTYVNAEKAAGQKKED) the chain is Cytoplasmic.

This sequence belongs to the MIP/aquaporin (TC 1.A.8) family.

It localises to the membrane. This is an uncharacterized protein from Saccharomyces cerevisiae (strain YJM789) (Baker's yeast).